The sequence spans 348 residues: Erythronate-4-phosphate dehydrogenase (348 aa).

Substrate contacts are provided by threonine 46 and threonine 67. Aspartate 147 contacts NAD(+). Arginine 209 is an active-site residue. Aspartate 233 provides a ligand contact to NAD(+). The active site involves glutamate 238. Residue histidine 255 is the Proton donor of the active site. Glycine 258 is a binding site for NAD(+). Residue tyrosine 259 coordinates substrate.

It belongs to the D-isomer specific 2-hydroxyacid dehydrogenase family. PdxB subfamily. In terms of assembly, homodimer.

The protein resides in the cytoplasm. The catalysed reaction is 4-phospho-D-erythronate + NAD(+) = (R)-3-hydroxy-2-oxo-4-phosphooxybutanoate + NADH + H(+). It participates in cofactor biosynthesis; pyridoxine 5'-phosphate biosynthesis; pyridoxine 5'-phosphate from D-erythrose 4-phosphate: step 2/5. Functionally, catalyzes the oxidation of erythronate-4-phosphate to 3-hydroxy-2-oxo-4-phosphonooxybutanoate. This chain is Erythronate-4-phosphate dehydrogenase, found in Bacteroides fragilis (strain ATCC 25285 / DSM 2151 / CCUG 4856 / JCM 11019 / LMG 10263 / NCTC 9343 / Onslow / VPI 2553 / EN-2).